The following is a 429-amino-acid chain: Type II methyltransferase M.AgeI (429 aa).

The SAM-dependent MTase C5-type domain maps to 1-429 (MKTIDLFCGA…MAETIKVAIS (429 aa)). The active site involves C80.

Belongs to the class I-like SAM-binding methyltransferase superfamily. C5-methyltransferase family.

It carries out the reaction a 2'-deoxycytidine in DNA + S-adenosyl-L-methionine = a 5-methyl-2'-deoxycytidine in DNA + S-adenosyl-L-homocysteine + H(+). A methylase, recognizes the double-stranded sequence 5'-ACCGGT-3', methylates C-3 on both strands, and protects the DNA from cleavage by the AgeI endonuclease. This is Type II methyltransferase M.AgeI (ageIM) from Thalassovita gelatinovora (Thalassobius gelatinovorus).